The following is a 282-amino-acid chain: Energy-coupling factor transporter ATP-binding protein EcfA1 (282 aa).

The region spanning 6–243 is the ABC transporter domain; sequence ISFDHVTFTY…VEMLKRIGLD (238 aa). Residue 40–47 coordinates ATP; the sequence is GHNGSGKS.

It belongs to the ABC transporter superfamily. Energy-coupling factor EcfA family. Forms a stable energy-coupling factor (ECF) transporter complex composed of 2 membrane-embedded substrate-binding proteins (S component), 2 ATP-binding proteins (A component) and 2 transmembrane proteins (T component).

It is found in the cell membrane. Functionally, ATP-binding (A) component of a common energy-coupling factor (ECF) ABC-transporter complex. Unlike classic ABC transporters this ECF transporter provides the energy necessary to transport a number of different substrates. This Lactobacillus delbrueckii subsp. bulgaricus (strain ATCC 11842 / DSM 20081 / BCRC 10696 / JCM 1002 / NBRC 13953 / NCIMB 11778 / NCTC 12712 / WDCM 00102 / Lb 14) protein is Energy-coupling factor transporter ATP-binding protein EcfA1.